A 300-amino-acid chain; its full sequence is TLR adapter interacting with SLC15A4 on the lysosome (300 aa).

Residues 289–293 carry the pLxIS motif motif; the sequence is SLHIS. Residue serine 293 is modified to Phosphoserine.

As to quaternary structure, interacts (via pLxIS motif) with IRF5; leading to IRF5 activation. Interacts with SLC15A4; leading to its recruitment to endolysosome. Post-translationally, the phosphorylated pLxIS motif constitutes an IRF5-binding motif, leading to recruitment of the transcription factor IRF5 to induce type-I interferons and other cytokines.

It is found in the lysosome membrane. The protein resides in the endosome membrane. Its subcellular location is the nucleus. It localises to the cytoplasm. Its function is as follows. Innate immune adapter that mediates the recruitment and activation of IRF5 downstream of endolysosomal toll-like receptors TLR7, TLR8 and TLR9. Following recruitment to endolysosome by SLC15A4 downstream of TLR7, TLR8 and TLR9, specifically recruits IRF5 transcription factor via its pLxIS motif, leading to IRF5 activation and subsequent expression of type I interferons. Plays a role in the regulation of endolysosomal pH in immune cells such as B-cells, dendritic cells and monocytes. The chain is TLR adapter interacting with SLC15A4 on the lysosome from Bos taurus (Bovine).